The primary structure comprises 77 residues: Antitoxin VapB2 (77 aa).

The region spanning A4–Q46 is the SpoVT-AbrB domain.

It belongs to the VapB family. Probably forms a complex with cognate toxin VapC2.

Antitoxin component of a type II toxin-antitoxin (TA) system. Neutralizes the effect of cognate toxin VapC2 but not non-cognate toxin VapC2. This is Antitoxin VapB2 from Haemophilus influenzae (strain 86-028NP).